Reading from the N-terminus, the 201-residue chain is Ubiquinone biosynthesis accessory factor UbiJ (201 aa).

The SCP2 domain occupies 15 to 112; that stretch reads LNTFLYRSPA…QVVQNFVALA (98 aa).

Belongs to the UbiJ family. Component of the Ubi complex metabolon, which regroups five ubiquinone biosynthesis proteins (UbiE, UbiF, UbiG, UbiH and UbiI) and two accessory factors (UbiK and the lipid-binding protein UbiJ). Interacts with UbiK and forms a complex composed of 2 UbiK subunits and 1 UbiJ subunit. The UbiK-UbiJ complex interacts with palmitoleic acid.

It is found in the cytoplasm. The protein operates within cofactor biosynthesis; ubiquinone biosynthesis. Its function is as follows. Required for ubiquinone (coenzyme Q) biosynthesis under aerobic conditions. Binds hydrophobic ubiquinone biosynthetic intermediates via its SCP2 domain and is essential for the stability of the Ubi complex. May constitute a docking platform where Ubi enzymes assemble and access their SCP2-bound polyprenyl substrates. The protein is Ubiquinone biosynthesis accessory factor UbiJ of Escherichia coli (strain K12).